Here is a 431-residue protein sequence, read N- to C-terminus: Histidinol dehydrogenase (431 aa).

The NAD(+) site is built by Y130, Q191, and N214. Residues S237, Q259, and H262 each coordinate substrate. Q259 and H262 together coordinate Zn(2+). Catalysis depends on proton acceptor residues E327 and H328. Residues H328, D361, E415, and H420 each coordinate substrate. D361 contacts Zn(2+). H420 provides a ligand contact to Zn(2+).

The protein belongs to the histidinol dehydrogenase family. Zn(2+) is required as a cofactor.

The catalysed reaction is L-histidinol + 2 NAD(+) + H2O = L-histidine + 2 NADH + 3 H(+). Its pathway is amino-acid biosynthesis; L-histidine biosynthesis; L-histidine from 5-phospho-alpha-D-ribose 1-diphosphate: step 9/9. Functionally, catalyzes the sequential NAD-dependent oxidations of L-histidinol to L-histidinaldehyde and then to L-histidine. The chain is Histidinol dehydrogenase from Syntrophotalea carbinolica (strain DSM 2380 / NBRC 103641 / GraBd1) (Pelobacter carbinolicus).